The chain runs to 341 residues: UDP-glucuronic acid decarboxylase 5 (341 aa).

The tract at residues 1–21 is disordered; that stretch reads MASSDKQTSPKPPPSPSPLRN. 60-85 is a binding site for NAD(+); that stretch reads DNYFTGSKDNLKKWIGHPRFELIRHD. Arg169 serves as a coordination point for substrate. Tyr172 serves as the catalytic Proton acceptor. 172–176 contacts NAD(+); it reads YDEGK. Asn201 is a binding site for substrate. Arg213 lines the NAD(+) pocket. Substrate contacts are provided by residues 214–218, 231–238, and 298–302; these read VVSNF, QKPGTQTR, and DPRQR.

The protein belongs to the NAD(P)-dependent epimerase/dehydratase family. UDP-glucuronic acid decarboxylase subfamily. It depends on NAD(+) as a cofactor.

Its subcellular location is the cytoplasm. It catalyses the reaction UDP-alpha-D-glucuronate + H(+) = UDP-alpha-D-xylose + CO2. The protein operates within nucleotide-sugar biosynthesis; UDP-alpha-D-xylose biosynthesis; UDP-alpha-D-xylose from UDP-alpha-D-glucuronate: step 1/1. Its function is as follows. Catalyzes the NAD-dependent decarboxylation of UDP-glucuronic acid to UDP-xylose. Necessary for the biosynthesis of the core tetrasaccharide in glycosaminoglycan biosynthesis. This is UDP-glucuronic acid decarboxylase 5 (UXS5) from Arabidopsis thaliana (Mouse-ear cress).